The following is a 292-amino-acid chain: Ubiquinone biosynthesis protein UbiV (292 aa).

[4Fe-4S] cluster-binding residues include cysteine 39, cysteine 180, cysteine 193, and cysteine 197.

Belongs to the peptidase U32 family. UbiV subfamily. As to quaternary structure, forms a heterodimer with UbiU. The cofactor is [4Fe-4S] cluster.

It participates in cofactor biosynthesis; ubiquinone biosynthesis. In terms of biological role, required for O(2)-independent ubiquinone (coenzyme Q) biosynthesis. Together with UbiU, is essential for the C6-hydroxylation reaction in the oxygen-independent ubiquinone biosynthesis pathway. This is Ubiquinone biosynthesis protein UbiV from Escherichia coli (strain K12).